A 131-amino-acid polypeptide reads, in one-letter code: Leptin receptor gene-related protein (131 aa).

A run of 4 helical transmembrane segments spans residues 7–27 (LVAL…GCAL), 32–52 (VYWP…HFIA), 69–89 (LAYF…VILA), and 100–120 (GLVL…FLIF).

This sequence belongs to the OB-RGRP/VPS55 family. As to quaternary structure, interacts with LEPR. Interacts with RAB13. In terms of tissue distribution, expressed at the highest levels in heart and placenta and at a lesser extent in lung, liver, skeletal muscle, kidney and pancreas.

Its subcellular location is the golgi apparatus membrane. It localises to the endosome membrane. Its function is as follows. Negatively regulates leptin receptor (LEPR) cell surface expression, and thus decreases response to leptin. Negatively regulates growth hormone (GH) receptor cell surface expression in liver. May play a role in liver resistance to GH during periods of reduced nutrient availability. In Homo sapiens (Human), this protein is Leptin receptor gene-related protein (LEPROT).